Reading from the N-terminus, the 358-residue chain is MSGAAARGDRLVGTWLLVICFMIFGMVVGGGHARTIGAGFVIQTWQPFTGIVPPLTHAAWERAFGLYKATAQYQAMQPKMTLAQFQSLYLPMFLDRDWGRLMAVVFLVPLAVFRLRGRISNRLTAWLLFLFGLGAGEATMGWYMTYEGMTSRILQPSPLYLGPHFVLAMLIFTAMLWTALTLRNPEPAILPGLARLRGLLSVSIGLIIATIGLGALVAASGALKVYNTFPLMDGHALPPHALAMHPLWLNFLANKATVQFEHRVAATVTAIVVVIAAAMGLRAPVGAKARDLFLLLAGLVSLQYILGMSTLVSGMAELGYVHELNAVLLLAACIACRHALRGATAAVPLPVYEMKAAE.

5 helical membrane passes run 11–31 (LVGT…VGGG), 98–117 (WGRL…RLRG), 123–143 (LTAW…MGWY), 159–179 (LYLG…LWTA), and 199–219 (LLSV…LVAA). H262 is a binding site for heme. A run of 3 helical transmembrane segments spans residues 264–284 (VAAT…LRAP), 292–312 (LFLL…STLV), and 315–335 (MAEL…ACIA). H322 contacts heme.

The protein belongs to the COX15/CtaA family. Type 2 subfamily. Interacts with CtaB. Heme b serves as cofactor.

It localises to the cell membrane. It catalyses the reaction Fe(II)-heme o + 2 A + H2O = Fe(II)-heme a + 2 AH2. The protein operates within porphyrin-containing compound metabolism; heme A biosynthesis; heme A from heme O: step 1/1. Its function is as follows. Catalyzes the conversion of heme O to heme A by two successive hydroxylations of the methyl group at C8. The first hydroxylation forms heme I, the second hydroxylation results in an unstable dihydroxymethyl group, which spontaneously dehydrates, resulting in the formyl group of heme A. The protein is Heme A synthase 1 of Acidiphilium cryptum (strain JF-5).